The primary structure comprises 251 residues: 5'-nucleotidase SurE (251 aa).

A divalent metal cation contacts are provided by Asp8, Asp9, Ser40, and Asn95.

The protein belongs to the SurE nucleotidase family. A divalent metal cation serves as cofactor.

It localises to the cytoplasm. The enzyme catalyses a ribonucleoside 5'-phosphate + H2O = a ribonucleoside + phosphate. Functionally, nucleotidase that shows phosphatase activity on nucleoside 5'-monophosphates. The polypeptide is 5'-nucleotidase SurE (Lawsonia intracellularis (strain PHE/MN1-00)).